A 688-amino-acid polypeptide reads, in one-letter code: PHD finger protein 21A (688 aa).

Lysine 65 participates in a covalent cross-link: Glycyl lysine isopeptide (Lys-Gly) (interchain with G-Cter in SUMO2). Disordered regions lie at residues 78-127 (SQSE…LTAS) and 327-373 (PQTV…ENPQ). Positions 85–127 (QTAQQQPLQPLQQQQPQQPQQQQQQQQQHAQQSAAAPPSLTAS) are enriched in low complexity. The segment covering 336-354 (SLEKQTVKSHPEAEEKQAE) has biased composition (basic and acidic residues). The segment at residues 434-446 (TRKRGRPPKYNAV) is a DNA-binding region (a.T hook). Residues 449-471 (FGALTPTSPPSSHPDSPENEKTE) are disordered. A Phosphothreonine modification is found at threonine 453. The residue at position 456 (serine 456) is a Phosphoserine. The segment at 497–544 (EDFCSVCRKSGQLLMCDTCSRVYHLDCLEPPLKTIPKGMWICPRCQDQ) adopts a PHD-type zinc-finger fold. Residues 571-609 (KEEEKQKLLKWSSDLKQEREQLEQKVKELSSSISKCMEM) are a coiled coil. Residues 650 to 688 (GALSNGPDCTPPANAASTPAPSPSSQSCTANCNQGEETK) are disordered. Residues 660–679 (PPANAASTPAPSPSSQSCTA) show a composition bias toward low complexity.

Component of a BHC histone deacetylase complex that contains HDAC1, HDAC2, HMG20B/BRAF35, KDM1A, RCOR1/CoREST and PHF21A/BHC80. The BHC complex may also contain ZMYM2, ZNF217, ZMYM3, GSE1 and GTF2I. In the complex, it interacts directly with HDAC1, HDAC2, HMG20B/BRAF35, KDM1A and RCOR1/CoREST. Expressed in the brain and testis. Weakly or not expressed in other tissues tested. Localized throughout the central nervous system (CNS) in brain, including the cerebellum, hippocampus, and cortex. Notably present in neuronal cells of granular cell layer and dentate gyrus in cerebellum and hippocampus, respectively. In the seminiferous tubules, the signals it is present strongly in spermatocytes, and weakly in spermatogonia and round spermatids. In some cases, it is also observed solely in spermatocytes (at protein level).

Its subcellular location is the nucleus. Component of the BHC complex, a corepressor complex that represses transcription of neuron-specific genes in non-neuronal cells. The BHC complex is recruited at RE1/NRSE sites by REST and acts by deacetylating and demethylating specific sites on histones, thereby acting as a chromatin modifier. In the BHC complex, it may act as a scaffold. Inhibits KDM1A-mediated demethylation of 'Lys-4' of histone H3 in vitro, suggesting a role in demethylation regulation. This Mus musculus (Mouse) protein is PHD finger protein 21A.